The following is a 253-amino-acid chain: Sporulation initiation inhibitor protein Soj (253 aa).

10 residues coordinate ATP: Lys-11, Gly-12, Gly-13, Val-14, Gly-15, Lys-16, Thr-17, Thr-18, Pro-214, and Asn-216. Residue Thr-17 participates in Mg(2+) binding.

The protein belongs to the ParA family. In terms of assembly, dimerizes in the presence of ATP but not ADP; ATP-binding is required for double-stranded (ds)DNA-binding. Interacts with DnaA.

It is found in the cytoplasm. The catalysed reaction is ATP + H2O = ADP + phosphate + H(+). Acts as a spatially regulated molecular switch, capable of either inhibiting or activating the ability of DnaA to initiate DNA replication. Monomeric ADP-Soj inhibits oligomerization of DnaA on single-stranded (ss)- or double-stranded (ds)DNA, thus inhibiting DNA replication initiation; does not disassemble premade DnaA-DNA filaments. Decreases the residence time of DnaA on the chromosome at its binding sites (oriC, replication forks and (probably) promoter-binding sites). Soj forms nucleoprotein filaments in an ATP- and DNA-dependent manner. Inhibits the initiation of sporulation, Spo0J antagonizes this inhibition. Soj ultimately inhibits the activation (phosphorylation) of Spo0A. This Bacillus subtilis (strain 168) protein is Sporulation initiation inhibitor protein Soj.